A 355-amino-acid chain; its full sequence is Arginine kinase (355 aa).

The Phosphagen kinase N-terminal domain occupies 8–90; that stretch reads KLQAGFKKLE…FDPIIEDYHV (83 aa). Residue 63-67 participates in L-arginine binding; sequence GVGIY. One can recognise a Phosphagen kinase C-terminal domain in the interval 118–355; the sequence is YVISTRVRCG…LQLIKMEKEM (238 aa). Residues 121-125 and histidine 184 contribute to the ATP site; that span reads STRVR. An L-arginine-binding site is contributed by glutamate 224. Arginine 228 is an ATP binding site. An L-arginine-binding site is contributed by cysteine 270. ATP is bound by residues 279 to 283 and 308 to 313; these read RASVH and RGTRGE. Glutamate 313 is an L-arginine binding site.

It belongs to the ATP:guanido phosphotransferase family. In terms of assembly, monomer.

The enzyme catalyses L-arginine + ATP = N(omega)-phospho-L-arginine + ADP + H(+). In Penaeus japonicus (Kuruma prawn), this protein is Arginine kinase.